A 703-amino-acid polypeptide reads, in one-letter code: Lethal(3)malignant brain tumor-like protein 2 (703 aa).

The segment at 1–85 (MEKPRGTEEA…NNRSLDGSGS (85 aa)) is disordered. Ser-13 bears the Phosphoserine mark. A compositionally biased stretch (acidic residues) spans 15 to 25 (PMEEEEEDDLD). The span at 35-49 (SYNSSAGSESSSYLE) shows a compositional bias: low complexity. Over residues 50–60 (ESSEAENEDRE) the composition is skewed to acidic residues. Ser-67 carries the post-translational modification Phosphoserine. Residues 73-82 (SSANNRSLDG) are compositionally biased toward polar residues. The segment at 81–116 (DGSGSEPAVCEMCGIVGTREAFFSKTKRFCSVSCSR) adopts an FCS-type zinc-finger fold. The Zn(2+) site is built by Cys-90, Cys-93, Cys-110, and Cys-114. MBT repeat units follow at residues 179 to 283 (FDWG…LVPP), 291 to 391 (TDWK…IKMS), 397 to 500 (MSHH…LTPP), and 508 to 604 (FAWE…LQPP). Ser-338 is subject to Phosphoserine. Lys-405 is covalently cross-linked (Glycyl lysine isopeptide (Lys-Gly) (interchain with G-Cter in SUMO2)). The segment at 604-649 (PVSAEPNTPQKGKDTTKKKKKQFGKKRKRIPSAKTRPLRQGSKKPL) is disordered. Positions 619–634 (TKKKKKQFGKKRKRIP) are enriched in basic residues. Glycyl lysine isopeptide (Lys-Gly) (interchain with G-Cter in SUMO2) cross-links involve residues Lys-647 and Lys-673. Residues 675-703 (EHQDISSLDRSPSPQLPLPIESIKQERNN) form a disordered region. Phosphoserine is present on residues Ser-681, Ser-685, and Ser-687. Residue Lys-698 forms a Glycyl lysine isopeptide (Lys-Gly) (interchain with G-Cter in SUMO1); alternate linkage. A Glycyl lysine isopeptide (Lys-Gly) (interchain with G-Cter in SUMO2); alternate cross-link involves residue Lys-698.

In terms of assembly, part of the E2F6.com-1 complex in G0 phase composed of E2F6, MGA, MAX, TFDP1, CBX3, BAT8, EUHMTASE1, RING1, RNF2, MBLR, BAT8 and YAF2. Phosphorylated. Ubiquitous.

It is found in the nucleus. Putative Polycomb group (PcG) protein. PcG proteins maintain the transcriptionally repressive state of genes, probably via a modification of chromatin, rendering it heritably changed in its expressibility. Its association with a chromatin-remodeling complex suggests that it may contribute to prevent expression of genes that trigger the cell into mitosis. Binds to monomethylated and dimethylated 'Lys-20' on histone H4. Binds histone H3 peptides that are monomethylated or dimethylated on 'Lys-4', 'Lys-9' or 'Lys-27'. The protein is Lethal(3)malignant brain tumor-like protein 2 (L3mbtl2) of Mus musculus (Mouse).